The following is a 337-amino-acid chain: uncharacterized protein (337 aa).

29–36 is a binding site for ATP; that stretch reads GPKSSGKS.

The protein belongs to the archaeal ATPase family.

This is an uncharacterized protein from Methanocaldococcus jannaschii (strain ATCC 43067 / DSM 2661 / JAL-1 / JCM 10045 / NBRC 100440) (Methanococcus jannaschii).